Reading from the N-terminus, the 74-residue chain is uncharacterized protein (74 aa).

Residues 20–40 (IYSYTLLTLLVITLICYLIHI) traverse the membrane as a helical segment.

Belongs to the asfivirus KP93L family.

It is found in the host membrane. This is an uncharacterized protein from African swine fever virus (isolate Tick/South Africa/Pretoriuskop Pr4/1996) (ASFV).